A 1954-amino-acid chain; its full sequence is MSAFEITVTPSRLKQKKRAEGREPAVVVMAPFSAKAIVQFEDVPITKTARRQVRVLNPSDDDIEVKVMKAIREEHNLSLEWMEHTVPARDEVSMELVWSPVLEVACKETLQLIDNRNFRKEVMIILKSKSNQPVKNPRKFPTVGKTLQLKSPTGAGKTMKSVVSAAVQQKKRMSAAAAPPSKQTWRVTAPSRPAAWAHPPPQAPLVEKNVYKTPQEEPVYISPQPRSLKENLSPMTPGNLLDVIDNLRFTPLTETRGKGQATIFPDNLAAWPTPTLKGNVKSCANDMRPRRITPDDLEDQPATNKTFDVKHSETINISLDTLDCSRIDGQPHTPLNKTTTIVHATHTRALACIHEEEGPSPPRTPTKSAIHDLKRDIKLVGSPLRKYSESMKDLSLLSPQTKYAIQGSMPNLNEMKIRSIEQNRYYQEQQIQIKAKDLNSSSSSEASLAGQQEFLFNHSEILAQSSRFNLHEVGRKSVKGSPVKNPHKRRSHELSFSDAPSNESLYRNETVAISPPKKQRVEDTTLPRSAAPANASARSSSAHAWPHAQSKKFKLAQTMSLMKKPATPRKVRDTSIQPSVKLYDSELYMQTCINPDPFAATTTIDPFLASTMYLDEQAVDRHQADFKKWLNALVSIPADLDADLNNKIDVGKLFNEVRNKELVVAPTKEEQSMNYLTKYRLETLRKAAVELFFSEQMRLPCSKVAVYVNKQALRIRSDRNLHLDVVMQRTILELLLCFNPLWLRLGLEVVFGEKIQMQSNRDIVGLSTFILNRLFRNKCEEQRYSKAYTLTEEYAETIKKHSLQKILFLLLFLDQAKQKRIVKHNPCLFVKKSPHKETKDILLRFSSELLANIGDITRELRRLGYVLQHRQTFLDEFDYAFNNLAVDLRDGVRLTRVMEVILLRDDLTRQLRVPAISRLQRIFNVKLALGALGEANFQLGGDIAAQDIVDGHREKTLSLLWQLIYKFRSPKFHAAATVLQKWWRRHWLHVVIQRRIRHKELMRRHRAATVIQAVFRGHQMRKYVKLFKTERTQAAIILQKFTRRYLAQKQLYQSYHSIITIQRWWRAQQLGRQHRQRFVELREAAIFLQRIWRRRLFAKKLLAAAETARLQRSQKQQAAASYIQMQWRSYQLGRIQRQQFLRQRDLIMFVQRRMRSKWSMLEQRKEFQQLKRAAINIQQRWRAKLSMRKCNADYLALRSSVLKVQAYRKATIQMRIDRNHYYSLRKNVICLQQRLRAIMKMREQRENYLRLRNASILVQKRYRMRQQMIQDRNAYLRTRKCIINVQRRWRATLQMRRERKNYLHLQTTTKRIQIKFRAKREMKKQRAEFLQLKKVTLVVQKRRRALLQMRKERQEYLHLREVTIKLQRRFHAQKSMRFMRAKYRGTQAAVSCLQMHWRNHLLRKRERNSFLQLRQAAITLQRRYRARLNMIKQLKSYAQLKQAAITIQTRYRAKKAMQKQVVLYQKQREAIIKVQRRYRGNLEMRKQIEVYQKQRQAVIRLQKWWRSIRDMRLCKAGYRRIRLSSLSIQRKWRATVQARRQREIFLSTIRKVRLMQAFIRATLLMRQQRREFEMKRRAAVVIQRRFRARCAMLKARQDYQLIQSSVILVQRKFRANRSMKQARQEFVQLRTIAVHLQQKFRGKRLMIEQRNCFQLLRCSMPGFQARARGFMARKRFQALMTPEMMDLIRQKRAAKVIQRYWRGYLIRRRQKHQGLLDIRKRIAQLRQEAKAVNSVRCKVQEAVRFLRGRFIASDALAVLSRLDRLSRTVPHLLMWCSEFMSTFCYGIMAQAIRSEVDKQLIERCSRIILNLARYNSTTVNTFQEGGLVTIAQMLLRWCDKDSEIFNTLCTLIWVFAHCPKKRKIIHDYMTNPEAIYMVRETKKLVARKEKMKQNARKPPPMTSGRYKSQKINFTPCSLPSLEPDFGIIRYSPYTFISSVYAFDTILCKLQIDMF.

The segment at 134–155 (VKNPRKFPTVGKTLQLKSPTGA) is disordered. A phosphoserine mark is found at Ser-151 and Ser-360. Thr-364 carries the post-translational modification Phosphothreonine. Phosphoserine is present on residues Ser-388, Ser-390, Ser-395, Ser-398, Ser-491, Ser-495, Ser-497, Ser-501, Ser-504, and Ser-514. A disordered region spans residues 476–548 (KSVKGSPVKN…SSSAHAWPHA (73 aa)). The segment covering 498–507 (DAPSNESLYR) has biased composition (polar residues). A compositionally biased stretch (low complexity) spans 528–548 (RSAAPANASARSSSAHAWPHA). The Calponin-homology (CH) domain occupies 836 to 968 (KETKDILLRF…LLWQLIYKFR (133 aa)). IQ domains follow at residues 1004-1033 (RHRA…ERTQ), 1386-1415 (TQAA…QLRQ), and 1467-1496 (QREA…KQRQ). Positions 1614-1641 (RANRSMKQARQEFVQLRTIAVHLQQKFR) form a coiled coil. 2 IQ domains span residues 1656 to 1687 (LRCS…MMDL) and 1690 to 1721 (QKRA…IRKR).

It is found in the cytoplasm. The protein localises to the nucleus. Its subcellular location is the cytoskeleton. It localises to the spindle. The protein resides in the microtubule organizing center. It is found in the perinuclear region. Functionally, required to maintain the structure of the centrosomal microtubule organizing center (MTOC) during mitosis. May have a preferential role in regulating neurogenesis. Required for germ cell mitosis and oocyte differentiation. The polypeptide is Protein abnormal spindle (Drosophila melanogaster (Fruit fly)).